Here is a 310-residue protein sequence, read N- to C-terminus: Syntaxin-related protein KNOLLE (310 aa).

N-acetylmethionine is present on Met1. The Cytoplasmic segment spans residues 1–283 (MNDLMTKSFM…AKSHQRNSRK (283 aa)). Positions 94 to 159 (NEIVSGLRKA…FQGLRQKMMS (66 aa)) form a coiled coil. A t-SNARE coiled-coil homology domain is found at 212–274 (VVEIQDRYDA…ADGANELKTA (63 aa)). A helical; Anchor for type IV membrane protein transmembrane segment spans residues 284–304 (WMCIGIIVLLLIILIVVIPII). Residues 305 to 310 (TSFSSS) are Vesicular-facing.

It belongs to the syntaxin family. Interacts with SNAP33 and/or NPSN11 to form a t-SNARE complex and with KEULE. Abundant in flowers and developing siliques. A low level expression is seen in the seedlings, roots, and leaves.

It is found in the membrane. Functionally, involved in cytokinesis. Acts as a cell plate-specific syntaxin, required for the fusion of vesicles at the plane of cell division. In Arabidopsis thaliana (Mouse-ear cress), this protein is Syntaxin-related protein KNOLLE (KN).